The chain runs to 221 residues: MNLAGMIDHTALKAETSRAQIETLCKEALEYKFASVCVNPTNVALAAELLKSDDAVKVCTVIGFPLGANTPEVKAFETQDAIKNGATEIDMVLNIGALKDGDLSLVERDIRAVVEAANGTLVKVIFENCLLTKEEIKTAAELSVKAGADFVKTSTGFSTGGATVEDIRLMRETVGPDIGVKASGGVRDFEGAKAMIDAGATRIGASAGIAIVTGGTSDSDY.

D90 functions as the Proton donor/acceptor in the catalytic mechanism. Residue K152 is the Schiff-base intermediate with acetaldehyde of the active site. The active-site Proton donor/acceptor is the K181.

Belongs to the DeoC/FbaB aldolase family. DeoC type 1 subfamily.

It is found in the cytoplasm. It carries out the reaction 2-deoxy-D-ribose 5-phosphate = D-glyceraldehyde 3-phosphate + acetaldehyde. It functions in the pathway carbohydrate degradation; 2-deoxy-D-ribose 1-phosphate degradation; D-glyceraldehyde 3-phosphate and acetaldehyde from 2-deoxy-alpha-D-ribose 1-phosphate: step 2/2. Its function is as follows. Catalyzes a reversible aldol reaction between acetaldehyde and D-glyceraldehyde 3-phosphate to generate 2-deoxy-D-ribose 5-phosphate. This is Deoxyribose-phosphate aldolase from Exiguobacterium sibiricum (strain DSM 17290 / CCUG 55495 / CIP 109462 / JCM 13490 / 255-15).